The chain runs to 276 residues: Ribosomal RNA small subunit methyltransferase A (276 aa).

S-adenosyl-L-methionine is bound by residues asparagine 15, leucine 17, glycine 42, glutamate 63, aspartate 88, and asparagine 111.

It belongs to the class I-like SAM-binding methyltransferase superfamily. rRNA adenine N(6)-methyltransferase family. RsmA subfamily.

The protein resides in the cytoplasm. The enzyme catalyses adenosine(1518)/adenosine(1519) in 16S rRNA + 4 S-adenosyl-L-methionine = N(6)-dimethyladenosine(1518)/N(6)-dimethyladenosine(1519) in 16S rRNA + 4 S-adenosyl-L-homocysteine + 4 H(+). In terms of biological role, specifically dimethylates two adjacent adenosines (A1518 and A1519) in the loop of a conserved hairpin near the 3'-end of 16S rRNA in the 30S particle. May play a critical role in biogenesis of 30S subunits. The polypeptide is Ribosomal RNA small subunit methyltransferase A (Geobacter sulfurreducens (strain ATCC 51573 / DSM 12127 / PCA)).